A 184-amino-acid polypeptide reads, in one-letter code: Ribosome-recycling factor (184 aa).

Belongs to the RRF family.

Its subcellular location is the cytoplasm. Functionally, responsible for the release of ribosomes from messenger RNA at the termination of protein biosynthesis. May increase the efficiency of translation by recycling ribosomes from one round of translation to another. The protein is Ribosome-recycling factor of Leptospira borgpetersenii serovar Hardjo-bovis (strain JB197).